The primary structure comprises 296 residues: Fructose-bisphosphate aldolase class 1 (296 aa).

The active-site Proton acceptor is the Glu175. The active-site Schiff-base intermediate with dihydroxyacetone-P is the Lys212.

It belongs to the class I fructose-bisphosphate aldolase family.

It catalyses the reaction beta-D-fructose 1,6-bisphosphate = D-glyceraldehyde 3-phosphate + dihydroxyacetone phosphate. Its pathway is carbohydrate degradation; glycolysis; D-glyceraldehyde 3-phosphate and glycerone phosphate from D-glucose: step 4/4. The chain is Fructose-bisphosphate aldolase class 1 from Staphylococcus aureus (strain Mu3 / ATCC 700698).